The following is a 177-amino-acid chain: Probetacellulin (177 aa).

A signal peptide spans 1–31 (MDPTAPGSSVSSLPLLLVLALGLAILHCVVA). Topologically, residues 32-118 (DGNTTRTPET…LFYLQQDRGQ (87 aa)) are extracellular. N-linked (GlcNAc...) asparagine glycosylation is found at asparagine 34, asparagine 42, and asparagine 52. The region spanning 65–105 (HFSRCPKQYKHYCIHGRCRFVVDEQTPSCICEKGYFGARCE) is the EGF-like domain. 3 disulfide bridges follow: cysteine 69–cysteine 82, cysteine 77–cysteine 93, and cysteine 95–cysteine 104. The propeptide at 112–177 (LQQDRGQILV…SEDIQETNIA (66 aa)) is removed in mature form. The helical transmembrane segment at 119–139 (ILVVCLIVVMVVFIILVIGVC) threads the bilayer. The Cytoplasmic segment spans residues 140 to 177 (TCCHPLRKHRKKKKEEKMETLDKDKTPISEDIQETNIA). Residues 153–177 (KEEKMETLDKDKTPISEDIQETNIA) form a disordered region. Over residues 154–167 (EEKMETLDKDKTPI) the composition is skewed to basic and acidic residues.

Monomer. Interacts with EGFR and ERBB4. Found in several mouse tissues including kidney, uterus and liver, as well as in beta tumor cell line and MCF-7 cells. It is not detected in the brain.

It is found in the secreted. The protein localises to the extracellular space. Its subcellular location is the cell membrane. Functionally, growth factor that binds to EGFR, ERBB4 and other EGF receptor family members. Potent mitogen for retinal pigment epithelial cells and vascular smooth muscle cells. This is Probetacellulin (Btc) from Mus musculus (Mouse).